Consider the following 1036-residue polypeptide: MYKKIDGSKSFVQMEREVLDFWNKNNIVDKSFALNEEGEYFTFYDGPPTANGKPHVGHVLTRVIKDLIPRYKVMKGYKVLRKAGWDTHGLPVELEIEKKLGISGKEEIEKFGVEEFIKECKDSVFTYSSMWKDMSEKLAFWVDMENPYVTYHNDYIESVWWALKQLWNKELLYKGHKVIPYCPRCGTALSSHEVAQGYKDVKEATAFVKFKVKGEENKYILAWTTTPWTLPSNVALAINKNFDYVEVKNNDEVLILAKELVDSVIDGEYEIIKEFKGEDILGLQYEQLLPFYTPEEEAFRVIHGDFVTLSDGTGIVHTAPAYGEDDNIVCKKHGLPMINLVDKEGKFIDCVEPWKGMPVKKADSKIIEYMDEKGILYKSEKFTHSYPHCWRCDTALLYYPTDSWFVRMTSLRDKLLENNNKVNWYPDNIRTGRFGKFLENVIDWGISRDRYWGTPLPIWECECGHRECIGSISELKEKGIDVPEDIELHKPYIDKVKLKCSKCGKEMKRTREVIDCWFDSGSMPFAQHHYPFENKEVFEKTFPAQFISEAVDQTRGWFYTLTAISTAIFDTNPFENCIVLGHVLDKHGLKMSKSKGNVVDPFDVLDSAGADASRWHFYTASAPWLPTRFSPEDVEETQRKFLSTLWNVYSFYVLYADIDKFNPLEYKDFVSENVMDKWIVSKLNSLIKDVEDHMDSYRITQAALAIEDFVDELSNWYVRRNRSRFWSEELREDKIGAYVTLYKVLTTVSLIAAPFVPFITEEIYNNLVRGLDKNALESIHLCNWPKYDENLIQKELEREMDEAYKIVKLGRSARNSVNIKNRQPLSSMLVSIKTLPEYYGRIIKDELNIKDIIFGADLSSYVEFNIKPNLPVLGKAYGRYIPQIRKEITSMDQMKLAQKIKQGEKVIINIDGNEIELNEENLLVTMKGLEGFAFAGEGNIGVVLNTTITDELKEEGQLREILSKIQNMRKEKEFEVADRIKLYVSGNRMLESVVEKFEDIIRKETIAEEVIYNEEREYVDCKINGEDFKIEVEAIK.

Residues 48–58 carry the 'HIGH' region motif; sequence PTANGKPHVGH. Positions 590-594 match the 'KMSKS' region motif; sequence KMSKS. Lysine 593 contributes to the ATP binding site.

It belongs to the class-I aminoacyl-tRNA synthetase family. IleS type 2 subfamily. As to quaternary structure, monomer. Zn(2+) serves as cofactor.

The protein resides in the cytoplasm. It carries out the reaction tRNA(Ile) + L-isoleucine + ATP = L-isoleucyl-tRNA(Ile) + AMP + diphosphate. Functionally, catalyzes the attachment of isoleucine to tRNA(Ile). As IleRS can inadvertently accommodate and process structurally similar amino acids such as valine, to avoid such errors it has two additional distinct tRNA(Ile)-dependent editing activities. One activity is designated as 'pretransfer' editing and involves the hydrolysis of activated Val-AMP. The other activity is designated 'posttransfer' editing and involves deacylation of mischarged Val-tRNA(Ile). This Clostridium tetani (strain Massachusetts / E88) protein is Isoleucine--tRNA ligase.